Here is a 302-residue protein sequence, read N- to C-terminus: Glycine--tRNA ligase alpha subunit (302 aa).

It belongs to the class-II aminoacyl-tRNA synthetase family. Tetramer of two alpha and two beta subunits.

It is found in the cytoplasm. It catalyses the reaction tRNA(Gly) + glycine + ATP = glycyl-tRNA(Gly) + AMP + diphosphate. This Xanthomonas oryzae pv. oryzae (strain PXO99A) protein is Glycine--tRNA ligase alpha subunit.